The following is a 171-amino-acid chain: Co-chaperone protein HscB homolog (171 aa).

Residues 2–74 (NHFELFGLPS…ISRAEYILAE (73 aa)) form the J domain.

The protein belongs to the HscB family. In terms of assembly, interacts with HscA and stimulates its ATPase activity.

Co-chaperone involved in the maturation of iron-sulfur cluster-containing proteins. Seems to help targeting proteins to be folded toward HscA. In Vibrio parahaemolyticus serotype O3:K6 (strain RIMD 2210633), this protein is Co-chaperone protein HscB homolog.